Here is a 70-residue protein sequence, read N- to C-terminus: Toxin Isom2 (70 aa).

The region spanning 2–65 is the LCN-type CS-alpha/beta domain; that stretch reads KNGYAVDSSG…ISDTRKKYCD (64 aa). Cystine bridges form between cysteine 16/cysteine 37, cysteine 22/cysteine 42, cysteine 26/cysteine 44, and cysteine 38/cysteine 64.

Expressed by the venom gland.

The protein localises to the secreted. Excitatory insect beta-toxins induce a spastic paralysis. They bind voltage-independently at site-4 of sodium channels (Nav) and shift the voltage of activation toward more negative potentials thereby affecting sodium channel activation and promoting spontaneous and repetitive firing. The protein is Toxin Isom2 of Isometrus vittatus (Bark scorpion).